We begin with the raw amino-acid sequence, 472 residues long: MSRTAPHRRAPKRYKTPPPAPAHVVTGNEPVIEIISLDMEARGVGRTETEDGTPGKVIFVEGVLPGERVSYSTHRSKPKFEQAEVVQVLRESVMRTKPKCTYFDICGGCSMQHLDIRAQVAVKQRVLEDNLQHLAKLRPETVFRPIHGPSWGYRYRARLAVRFLPEKGGMRIGFHEKKSSYIADMKTCEVLPPHVSAMLMPLRFMVRKLSIYDRMPQLELAVGSSVTALVVRNLEPITAADEQVLRDFADEHKVQFWLQPGGPDTVTPFYPLDVQLDYTLPEYGIRMPFKPTDFTQVNHAINRVLVSRALRLLAPARTDRVLDLFCGIGNFTLPLARISKEVMGIEGSEVLTSRALANAGLNGVAGHTSFECRNLFEVTADDLRALGHFDKFLIDPPREGALAVAKALAEIARSGNGPLPKRIVYVSCAPATLARDAGLLVHEAGYRLVGAGVVNMFPHTSHVESIALFERD.

Over residues 1 to 15 the composition is skewed to basic residues; sequence MSRTAPHRRAPKRYK. Positions 1–23 are disordered; sequence MSRTAPHRRAPKRYKTPPPAPAH. Positions 23–87 constitute a TRAM domain; sequence HVVTGNEPVI…PKFEQAEVVQ (65 aa). [4Fe-4S] cluster is bound by residues Cys-100, Cys-106, Cys-109, and Cys-188. 6 residues coordinate S-adenosyl-L-methionine: Gln-296, Phe-325, Asn-330, Glu-346, Asn-374, and Asp-395. Cys-428 (nucleophile) is an active-site residue.

The protein belongs to the class I-like SAM-binding methyltransferase superfamily. RNA M5U methyltransferase family. RlmD subfamily.

The enzyme catalyses uridine(1939) in 23S rRNA + S-adenosyl-L-methionine = 5-methyluridine(1939) in 23S rRNA + S-adenosyl-L-homocysteine + H(+). Functionally, catalyzes the formation of 5-methyl-uridine at position 1939 (m5U1939) in 23S rRNA. In Paraburkholderia xenovorans (strain LB400), this protein is 23S rRNA (uracil(1939)-C(5))-methyltransferase RlmD.